The chain runs to 378 residues: Ribosomal RNA large subunit methyltransferase G (378 aa).

It belongs to the methyltransferase superfamily. RlmG family.

The protein resides in the cytoplasm. It carries out the reaction guanosine(1835) in 23S rRNA + S-adenosyl-L-methionine = N(2)-methylguanosine(1835) in 23S rRNA + S-adenosyl-L-homocysteine + H(+). Its function is as follows. Specifically methylates the guanine in position 1835 (m2G1835) of 23S rRNA. This Citrobacter koseri (strain ATCC BAA-895 / CDC 4225-83 / SGSC4696) protein is Ribosomal RNA large subunit methyltransferase G.